The chain runs to 107 residues: YAPSALVLTVGHGESAATAAPLRAVTLTCAPTASGTHPAADAACAELRAAHGDPSALAADDAVMCTREYAPVVVTVDGVWQGRRLSYERTFANECVKNAGSASVFTF.

Disulfide bonds link Cys29-Cys44 and Cys65-Cys95.

The protein belongs to the protease inhibitor I16 (SSI) family. As to quaternary structure, homodimer.

It is found in the secreted. Inhibitor of subtilisin BPN' and trypsin. In Streptomyces coelicolor, this protein is Subtilisin inhibitor-like protein 3.